A 233-amino-acid chain; its full sequence is Large ribosomal subunit protein uL1 (233 aa).

Belongs to the universal ribosomal protein uL1 family. Part of the 50S ribosomal subunit.

Its function is as follows. Binds directly to 23S rRNA. The L1 stalk is quite mobile in the ribosome, and is involved in E site tRNA release. In terms of biological role, protein L1 is also a translational repressor protein, it controls the translation of the L11 operon by binding to its mRNA. This chain is Large ribosomal subunit protein uL1, found in Brucella canis (strain ATCC 23365 / NCTC 10854 / RM-666).